The primary structure comprises 297 residues: MVSIKVSLADFIVKTDEGWIPSDNCPALDRFKTKTEKELLDSIKREGADRASIRKQLFLTPISNKRLTQIGGVPVRDIRTSTTIPSSTRNLITDWLLNIFNDEESGEEVENAIASKYPDIFCSADKISRVAQRLENRRDRVHEDGFRILSATMLAIDSDIATEGKCEIVRATEDAIIAKFEPVSEHLCIGNPRGVFYKAFPIKKEQPMVYGIKALLGISNRDFIMNHGHGHLRTVPYSEINNAIRSFAKKNEAEIKRIRSDSLSPNAGEKFINMCDMLLQKEKIETIIAKIMKNDKN.

Residues 119-121 (DIF), Lys198, and 227-229 (HGH) contribute to the ATP site. An RNA-binding region spans residues 212–247 (IKALLGISNRDFIMNHGHGHLRTVPYSEINNAIRSF). The For NTPase and RTPase activities role is filled by His231. Residue Arg233 coordinates ATP.

This sequence belongs to the rotavirus NSP2 family. Homooctamer. Interacts with VP1; this interaction is weak. Interacts with NSP5; this interaction leads to up-regulation of NSP5 phosphorylation and formation of viral factories. Mg(2+) is required as a cofactor.

Its subcellular location is the host cytoplasm. Functionally, participates in replication and packaging of the viral genome. Plays a crucial role, together with NSP5, in the formation of virus factories (viroplasms) which are large inclusions in the host cytoplasm where replication intermediates are assembled and viral RNA replication takes place. Displays ssRNA binding, NTPase, RNA triphosphatase (RTPase) and ATP-independent helix-unwinding activities. The unwinding activity may prepare and organize plus-strand RNAs for packaging and replication by removing interfering secondary structures. The RTPase activity plays a role in the removal of the gamma-phosphate from the rotavirus RNA minus strands of dsRNA genome segments. The polypeptide is Non-structural protein 2 (Homo sapiens (Human)).